The sequence spans 1960 residues: Myosin-9 (1960 aa).

Alanine 2 is modified (N-acetylalanine). A mediates interaction with LIMCH1 region spans residues 2–838 (AQQAADKYLY…RLFTKVKPLL (837 aa)). Lysine 8 carries the post-translational modification N6-acetyllysine. Phosphotyrosine is present on tyrosine 11. The region spanning 27–77 (AAKKLVWVPSDKSGFEPASLKEEVGEEAIVELVENGKKVKVNKDDIQKMNP) is the Myosin N-terminal SH3-like domain. Positions 81–776 (SKVEDMAELT…VLAHLEEERD (696 aa)) constitute a Myosin motor domain. Position 102 is an N6-acetyllysine (lysine 102). 174-181 (GESGAGKT) contacts ATP. N6-acetyllysine is present on residues lysine 299, lysine 435, and lysine 613. A Phosphoserine modification is found at serine 628. Residues 654-676 (LAKLMATLRNTNPNFVRCIIPNH) are actin-binding. The residue at position 754 (tyrosine 754) is a Phosphotyrosine. One can recognise an IQ domain in the interval 779–808 (ITDVIIGFQACCRGYLARKAFAKRQQQLTA). Residues 837 to 1926 (LLQVSRQEEE…LKNKLRRGDL (1090 aa)) are a coiled coil. N6-succinyllysine is present on lysine 850. Residues lysine 860, lysine 975, and lysine 1024 each carry the N6-acetyllysine modification. The span at 1035-1055 (RLRREEKQRQELEKTRRKLEG) shows a compositional bias: basic and acidic residues. Residues 1035 to 1057 (RLRREEKQRQELEKTRRKLEGDS) form a disordered region. Serine 1114 is modified (phosphoserine). Positions 1118–1137 (EDLESERASRNKAEKQKRDL) are disordered. Positions 1122-1137 (SERASRNKAEKQKRDL) are enriched in basic and acidic residues. 8 positions are modified to N6-acetyllysine: lysine 1234, lysine 1249, lysine 1357, lysine 1392, lysine 1404, lysine 1410, lysine 1459, and lysine 1638. Lysine 1669 is subject to N6-succinyllysine. Position 1714 is a phosphoserine (serine 1714). N6-acetyllysine is present on residues lysine 1793, lysine 1802, and lysine 1845. The interval 1877-1960 (RQLEEAEEEA…ADGAEAKPAE (84 aa)) is disordered. Residue arginine 1923 is modified to Omega-N-methylarginine. At serine 1943 the chain carries Phosphoserine. Positions 1948 to 1960 (DGKADGAEAKPAE) are enriched in basic and acidic residues.

Belongs to the TRAFAC class myosin-kinesin ATPase superfamily. Myosin family. Myosin is a hexameric protein that consists of 2 heavy chain subunits (MHC), 2 alkali light chain subunits (MLC) and 2 regulatory light chain subunits (MLC-2). Interacts with RASIP1. Interacts with DDR1. Interacts with PDLIM2. Interacts with SVIL. Interacts with HTRA3. Interacts with Myo7a. Interacts with CFAP95. Interacts with LIMCH1; independently of the integration of MYH9 into the myosin complex. Interacts with RAB3A. Interacts with ZBED4. Interacts with S100A4; this interaction increases cell motility. In terms of assembly, (Microbial infection) Interacts with herpes simplex virus 1/HHV-1 envelope glycoprotein B. In terms of processing, ISGylated. Post-translationally, ubiquitination. In the kidney, expressed in the glomeruli. Also expressed in leukocytes.

The protein resides in the cytoplasm. It is found in the cytoskeleton. It localises to the cell cortex. The protein localises to the cytoplasmic vesicle. Its subcellular location is the secretory vesicle. The protein resides in the cortical granule. It is found in the cell membrane. Functionally, cellular myosin that appears to play a role in cytokinesis, cell shape, and specialized functions such as secretion and capping. Required for cortical actin clearance prior to oocyte exocytosis. Promotes cell motility in conjunction with S100A4. During cell spreading, plays an important role in cytoskeleton reorganization, focal contact formation (in the margins but not the central part of spreading cells), and lamellipodial retraction; this function is mechanically antagonized by MYH10. Its function is as follows. (Microbial infection) Acts as a receptor for herpes simplex virus 1/HHV-1 envelope glycoprotein B. This chain is Myosin-9 (MYH9), found in Homo sapiens (Human).